The chain runs to 224 residues: Cytochrome c oxidase subunit 2 (224 aa).

Topologically, residues 1–26 (MSTWGQINLMDPASPIQMEMMLFHDH) are mitochondrial intermembrane. A helical transmembrane segment spans residues 27-48 (AMAILIGIFTLVSLLGVKLCFN). Over 49–62 (TLSTRTMHEAQLLE) the chain is Mitochondrial matrix. Residues 63–82 (TLWTILPAFLLVWLALPSLR) form a helical membrane-spanning segment. The Mitochondrial intermembrane portion of the chain corresponds to 83–224 (LLYLLDEQGS…DVKDFIKMCN (142 aa)). H161, C196, E198, C200, H204, and M207 together coordinate Cu cation. E198 is a binding site for Mg(2+).

Belongs to the cytochrome c oxidase subunit 2 family. As to quaternary structure, component of the cytochrome c oxidase (complex IV, CIV), a multisubunit enzyme composed of a catalytic core of 3 subunits and several supernumerary subunits. The complex exists as a monomer or a dimer and forms supercomplexes (SCs) in the inner mitochondrial membrane with ubiquinol-cytochrome c oxidoreductase (cytochrome b-c1 complex, complex III, CIII). Cu cation serves as cofactor.

The protein resides in the mitochondrion inner membrane. It carries out the reaction 4 Fe(II)-[cytochrome c] + O2 + 8 H(+)(in) = 4 Fe(III)-[cytochrome c] + 2 H2O + 4 H(+)(out). In terms of biological role, component of the cytochrome c oxidase, the last enzyme in the mitochondrial electron transport chain which drives oxidative phosphorylation. The respiratory chain contains 3 multisubunit complexes succinate dehydrogenase (complex II, CII), ubiquinol-cytochrome c oxidoreductase (cytochrome b-c1 complex, complex III, CIII) and cytochrome c oxidase (complex IV, CIV), that cooperate to transfer electrons derived from NADH and succinate to molecular oxygen, creating an electrochemical gradient over the inner membrane that drives transmembrane transport and the ATP synthase. Cytochrome c oxidase is the component of the respiratory chain that catalyzes the reduction of oxygen to water. Electrons originating from reduced cytochrome c in the intermembrane space (IMS) are transferred via the dinuclear copper A center (CU(A)) of subunit 2 and heme A of subunit 1 to the active site in subunit 1, a binuclear center (BNC) formed by heme A3 and copper B (CU(B)). The BNC reduces molecular oxygen to 2 water molecules using 4 electrons from cytochrome c in the IMS and 4 protons from the mitochondrial matrix. The chain is Cytochrome c oxidase subunit 2 (COII) from Albinaria caerulea (Land snail).